Here is a 480-residue protein sequence, read N- to C-terminus: Sensor histidine kinase CusS (480 aa).

The Cytoplasmic segment spans residues 1–15 (MVSKPFQRPFSLATR). Residues 16 to 36 (LTFFISLATIAAFFAFAWIMI) traverse the membrane as a helical segment. Residues 37-186 (HSVKVHFAEQ…LHYINDLMNK (150 aa)) lie on the Periplasmic side of the membrane. Residues 187 to 207 (LIMTASVISILIVFIVLLAVH) form a helical membrane-spanning segment. One can recognise an HAMP domain in the interval 207–260 (HKGHAPIRSVSRQIQNITSKDLDVRLDPQTVPIELEQLVLSFNHMIERIEDVFT). At 208–480 (KGHAPIRSVS…GTRFVIILPA (273 aa)) the chain is on the cytoplasmic side. In terms of domain architecture, Histidine kinase spans 268–480 (DIAHEIRTPI…GTRFVIILPA (213 aa)). Position 271 is a phosphohistidine; by autocatalysis (H271).

Post-translationally, autophosphorylated.

It is found in the cell inner membrane. The enzyme catalyses ATP + protein L-histidine = ADP + protein N-phospho-L-histidine.. In terms of biological role, member of the two-component regulatory system CusS/CusR involved in response to copper and silver. Acts as a copper/silver ion sensor. Activates CusR by phosphorylation. This is Sensor histidine kinase CusS (cusS) from Escherichia coli O6:H1 (strain CFT073 / ATCC 700928 / UPEC).